Reading from the N-terminus, the 435-residue chain is Serine--tRNA ligase (435 aa).

An L-serine-binding site is contributed by 234–236 (TAE). Position 265–267 (265–267 (RRE)) interacts with ATP. An L-serine-binding site is contributed by glutamate 288. 352 to 355 (EISS) is an ATP binding site. Residue serine 388 coordinates L-serine.

Belongs to the class-II aminoacyl-tRNA synthetase family. Type-1 seryl-tRNA synthetase subfamily. Homodimer. The tRNA molecule binds across the dimer.

It is found in the cytoplasm. It carries out the reaction tRNA(Ser) + L-serine + ATP = L-seryl-tRNA(Ser) + AMP + diphosphate + H(+). It catalyses the reaction tRNA(Sec) + L-serine + ATP = L-seryl-tRNA(Sec) + AMP + diphosphate + H(+). The protein operates within aminoacyl-tRNA biosynthesis; selenocysteinyl-tRNA(Sec) biosynthesis; L-seryl-tRNA(Sec) from L-serine and tRNA(Sec): step 1/1. Its function is as follows. Catalyzes the attachment of serine to tRNA(Ser). Is also able to aminoacylate tRNA(Sec) with serine, to form the misacylated tRNA L-seryl-tRNA(Sec), which will be further converted into selenocysteinyl-tRNA(Sec). The polypeptide is Serine--tRNA ligase (Synechococcus sp. (strain JA-2-3B'a(2-13)) (Cyanobacteria bacterium Yellowstone B-Prime)).